The following is a 173-amino-acid chain: Peptidoglycan-associated lipoprotein (173 aa).

An N-terminal signal peptide occupies residues 1–21 (MKSKKIFKILTLLLPMITTFS). The N-palmitoyl cysteine moiety is linked to residue cysteine 22. The S-diacylglycerol cysteine moiety is linked to residue cysteine 22. The OmpA-like domain maps to 59–173 (ETLEKLKKGN…KNRRSVIIYQ (115 aa)).

Belongs to the Pal lipoprotein family.

Its subcellular location is the cell outer membrane. This chain is Peptidoglycan-associated lipoprotein, found in Buchnera aphidicola subsp. Baizongia pistaciae (strain Bp).